The primary structure comprises 138 residues: Dehydratase iacD (138 aa).

Residues 18–113 enclose the EthD domain; that stretch reads GVSEEDFIEW…LKDQDVWMDN (96 aa).

Belongs to the tpcK family.

Its pathway is secondary metabolite biosynthesis. Its function is as follows. Dehydratase; part of the gene cluster that mediates the biosynthesis of iso-A82775C, a enylepoxycyclohexane and biosynthetic precursor of the chloropestolide anticancer natural products. Within the cluster, the prenyltransferase iacE prenylates siccayne to generate pestalodiol E, using dimethylallyl diphosphate (DMAPP) as cosubstrate. The probable oxidoreductase iacF is then involved in the epoxidation of pestalodiol F to pestalodiol F, which is further converted to pestalofone A by the short-chain dehydrogenase/reductase iacG. Iso-A82775C is subsequently generated from pestalofone A by the short-chain dehydrogenase/reductase iacC. Iso-A82775C is further condensed with maldoxin via a Diels-Alder reaction to produce the anticancer natural products chloropestolides A to E. The chain is Dehydratase iacD from Pestalotiopsis fici (strain W106-1 / CGMCC3.15140).